Reading from the N-terminus, the 562-residue chain is Phosphatidylinositol 4-phosphate 5-kinase type-1 alpha (562 aa).

In terms of domain architecture, PIPK spans 81–449 (TSSALKGAIQ…RFQRFMCNTV (369 aa)). Lys103 is covalently cross-linked (Glycyl lysine isopeptide (Lys-Gly) (interchain with G-Cter in ubiquitin)). Ser486 carries the post-translational modification Phosphoserine. The disordered stretch occupies residues 506-526 (HLGRPDVLPQTPPLEEISEGS).

In terms of assembly, interacts with RAC1. Interacts with TUT1. Forms a complex with CDH1/E-cadherin, CTNNB1/beta-catenin and CTNND1 at the plasma membrane upon calcium stimulation. Found in a ternary complex with IRS1 and DGKZ in the absence of insulin stimulation. Interacts with DGKZ. Interacts with PIP4K2C; the interaction inhibits PIP5K1A kinase activity. In terms of tissue distribution, highly expressed in heart, placenta, skeletal muscle, kidney and pancreas. Detected at lower levels in brain, lung and liver.

It is found in the cell membrane. It localises to the cytoplasm. The protein resides in the nucleus. The protein localises to the nucleus speckle. Its subcellular location is the cell projection. It is found in the ruffle. It localises to the lamellipodium. The enzyme catalyses a 1,2-diacyl-sn-glycero-3-phospho-(1D-myo-inositol 4-phosphate) + ATP = a 1,2-diacyl-sn-glycero-3-phospho-(1D-myo-inositol-4,5-bisphosphate) + ADP + H(+). The catalysed reaction is 1-octadecanoyl-2-(5Z,8Z,11Z,14Z)-eicosatetraenoyl-sn-glycero-3-phospho-1D-myo-inositol 4-phosphate + ATP = 1-octadecanoyl-2-(5Z,8Z,11Z,14Z)-eicosatetraenoyl-sn-glycero-3-phospho-1D-myo-inositol 4,5-bisphosphate + ADP + H(+). It carries out the reaction 1,2-dihexadecanoyl-sn-glycero-3-phospho-(1D-myo-inositol-4-phosphate) + ATP = 1,2-dihexadecanoyl-sn-glycero-3-phospho-(1D-myo-inositol-4,5-bisphosphate) + ADP + H(+). It catalyses the reaction 1-octadecanoyl-2-(9Z)-octadecenoyl-sn-glycero-3-phospho-1D-myo-inositol 4-phosphate + ATP = 1-octadecanoyl-2-(9Z)-octadecenoyl-sn-glycero-3-phospho-1D-myo-inositol 4,5-bisphosphate + ADP + H(+). The enzyme catalyses 1-octadecanoyl-2-(9Z)-octadecenoyl-sn-glycero-3-phospho-1D-myo-inositol + ATP = 1-octadecanoyl-2-(9Z)-octadecenoyl-sn-glycero-3-phospho-1D-myo-inositol 5-phosphate + ADP + H(+). The catalysed reaction is 1-octadecanoyl-2-(9Z,12Z)-octadecadienoyl-sn-glycero-3-phospho-1D-myo-inositol + ATP = 1-octadecanoyl-2-(9Z,12Z)-octadecadienoyl-sn-glycero-3-phospho-1D-myo-inositol 5-phosphate + ADP + H(+). It carries out the reaction 1-octadecanoyl-2-(5Z,8Z,11Z,14Z-eicosatetraenoyl)-sn-glycero-3-phospho-(1D-myo-inositol) + ATP = 1-octadecanoyl-2-(5Z,8Z,11Z,14Z)-eicosatetraenoyl-sn-glycero-3-phospho-1D-myo-inositol 5-phosphate + ADP + H(+). It catalyses the reaction 1,2-di-(9Z,12Z)-octadecadienoyl-sn-glycero-3-phospho-1D-myo-inositol + ATP = 1,2-di(9Z,12Z)-octadecadienoyl-sn-glycero-3-phospho-1D-myo-inositol 5-phosphate + ADP + H(+). With respect to regulation, activated by diarachidonoyl phosphatidic acid (DAPA), when 1,2-dipalmitoyl-PI4P is used as a substrate. In terms of biological role, catalyzes the phosphorylation of phosphatidylinositol 4-phosphate (PtdIns(4)P/PI4P) to form phosphatidylinositol 4,5-bisphosphate (PtdIns(4,5)P2/PIP2), a lipid second messenger that regulates several cellular processes such as signal transduction, vesicle trafficking, actin cytoskeleton dynamics, cell adhesion, and cell motility. PtdIns(4,5)P2 can directly act as a second messenger or can be utilized as a precursor to generate other second messengers: inositol 1,4,5-trisphosphate (IP3), diacylglycerol (DAG) or phosphatidylinositol-3,4,5-trisphosphate (PtdIns(3,4,5)P3/PIP3). PIP5K1A-mediated phosphorylation of PtdIns(4)P is the predominant pathway for PtdIns(4,5)P2 synthesis. Can also use phosphatidylinositol (PtdIns) as substrate in vitro. Together with PIP5K1C, is required for phagocytosis, both enzymes regulating different types of actin remodeling at sequential steps. Promotes particle ingestion by activating the WAS GTPase-binding protein that induces Arp2/3 dependent actin polymerization at the nascent phagocytic cup. Together with PIP5K1B, is required, after stimulation by G-protein coupled receptors, for the synthesis of IP3 that will induce stable platelet adhesion. Recruited to the plasma membrane by the E-cadherin/beta-catenin complex where it provides the substrate PtdIns(4,5)P2 for the production of PtdIns(3,4,5)P3, IP3 and DAG, that will mobilize internal calcium and drive keratinocyte differentiation. Positively regulates insulin-induced translocation of SLC2A4 to the cell membrane in adipocytes. Together with PIP5K1C has a role during embryogenesis. Independently of its catalytic activity, is required for membrane ruffling formation, actin organization and focal adhesion formation during directional cell migration by controlling integrin-induced translocation of the small GTPase RAC1 to the plasma membrane. Also functions in the nucleus where it acts as an activator of TUT1 adenylyltransferase activity in nuclear speckles, thereby regulating mRNA polyadenylation of a select set of mRNAs. The chain is Phosphatidylinositol 4-phosphate 5-kinase type-1 alpha from Homo sapiens (Human).